Here is a 437-residue protein sequence, read N- to C-terminus: Enolase (437 aa).

Gln162 contacts (2R)-2-phosphoglycerate. Catalysis depends on Glu204, which acts as the Proton donor. Mg(2+) contacts are provided by Asp251, Glu297, and Asp324. Positions 349, 378, 379, and 400 each coordinate (2R)-2-phosphoglycerate. The active-site Proton acceptor is Lys349.

The protein belongs to the enolase family. It depends on Mg(2+) as a cofactor.

The protein resides in the cytoplasm. Its subcellular location is the secreted. It is found in the cell surface. It carries out the reaction (2R)-2-phosphoglycerate = phosphoenolpyruvate + H2O. The protein operates within carbohydrate degradation; glycolysis; pyruvate from D-glyceraldehyde 3-phosphate: step 4/5. In terms of biological role, catalyzes the reversible conversion of 2-phosphoglycerate (2-PG) into phosphoenolpyruvate (PEP). It is essential for the degradation of carbohydrates via glycolysis. This chain is Enolase, found in Prosthecochloris aestuarii (strain DSM 271 / SK 413).